We begin with the raw amino-acid sequence, 499 residues long: Glutamyl-tRNA(Gln) amidotransferase subunit B, chloroplastic/mitochondrial (499 aa).

This sequence belongs to the GatB/GatE family. GatB subfamily. In terms of assembly, subunit of the heterotrimeric GatCAB amidotransferase (AdT) complex, composed of A, B and C subunits.

It localises to the mitochondrion. The protein resides in the plastid. Its subcellular location is the chloroplast. The enzyme catalyses L-glutamyl-tRNA(Gln) + L-glutamine + ATP + H2O = L-glutaminyl-tRNA(Gln) + L-glutamate + ADP + phosphate + H(+). Its function is as follows. Allows the formation of correctly charged Gln-tRNA(Gln) through the transamidation of misacylated Glu-tRNA(Gln) in chloroplasts and mitochondria. The reaction takes place in the presence of glutamine and ATP through an activated gamma-phospho-Glu-tRNA(Gln). This is Glutamyl-tRNA(Gln) amidotransferase subunit B, chloroplastic/mitochondrial from Ostreococcus lucimarinus (strain CCE9901).